Here is a 416-residue protein sequence, read N- to C-terminus: Serine hydroxymethyltransferase (416 aa).

(6S)-5,6,7,8-tetrahydrofolate-binding positions include leucine 121 and 125–127 (GHL). Residue lysine 229 is modified to N6-(pyridoxal phosphate)lysine.

Belongs to the SHMT family. In terms of assembly, homodimer. Pyridoxal 5'-phosphate is required as a cofactor.

The protein resides in the cytoplasm. It catalyses the reaction (6R)-5,10-methylene-5,6,7,8-tetrahydrofolate + glycine + H2O = (6S)-5,6,7,8-tetrahydrofolate + L-serine. It participates in one-carbon metabolism; tetrahydrofolate interconversion. Its pathway is amino-acid biosynthesis; glycine biosynthesis; glycine from L-serine: step 1/1. In terms of biological role, catalyzes the reversible interconversion of serine and glycine with tetrahydrofolate (THF) serving as the one-carbon carrier. This reaction serves as the major source of one-carbon groups required for the biosynthesis of purines, thymidylate, methionine, and other important biomolecules. Also exhibits THF-independent aldolase activity toward beta-hydroxyamino acids, producing glycine and aldehydes, via a retro-aldol mechanism. In Neisseria meningitidis serogroup B (strain ATCC BAA-335 / MC58), this protein is Serine hydroxymethyltransferase.